An 816-amino-acid chain; its full sequence is Nicotine 6-hydroxylase large subunit (816 aa).

E745 provides a ligand contact to Mo-molybdopterin cytosine dinucleotide.

The protein belongs to the xanthine dehydrogenase family. In terms of assembly, heterotrimer composed of a large subunit (NdhL), a medium subunit (NdhM) and a small subunit (NdhS). Mo-molybdopterin cytosine dinucleotide serves as cofactor.

The protein localises to the cytoplasm. It carries out the reaction (R)-nicotine + A + H2O = (R)-6-hydroxynicotine + AH2. The enzyme catalyses (S)-nicotine + A + H2O = (S)-6-hydroxynicotine + AH2. Its pathway is alkaloid degradation; nicotine degradation; 6-hydroxypseudooxynicotine from nicotine (R-isomer route): step 1/2. It functions in the pathway alkaloid degradation; nicotine degradation; 6-hydroxypseudooxynicotine from nicotine (S-isomer route): step 1/2. With respect to regulation, nicotine dehydrogenase activity is inhibited by tungsten. Its function is as follows. Component of the nicotine 6-hydroxylase, which is involved in the degradation of nicotine. Catalyzes the hydroxylation of the pyridine ring at C6 to form 6-hydroxynicotine. Can use both L-nicotine and D-nicotine. This Paenarthrobacter nicotinovorans (Arthrobacter nicotinovorans) protein is Nicotine 6-hydroxylase large subunit.